Here is a 776-residue protein sequence, read N- to C-terminus: Protein SEY1 (776 aa).

Residues 1–681 (MADRSAIQLI…KRSIITTRTH (681 aa)) are Cytoplasmic-facing. The GB1/RHD3-type G domain occupies 34 to 263 (GLDYHVISVF…TENYYFKPQY (230 aa)). Position 44–51 (44–51 (GSQSSGKS)) interacts with GTP. Residues 682-702 (IPPWIYVLLAVLGWNEFVAVI) traverse the membrane as a helical segment. Residues 703–705 (RNP) lie on the Lumenal side of the membrane. The chain crosses the membrane as a helical span at residues 706-726 (LFVTLTLILGATFFVIHKFGL). Over 727-776 (WGPVVNVVQSAVGETRTAIKDKLRQFVVEDHEVKESFEMKDFSKNEQKEK) the chain is Cytoplasmic.

Belongs to the TRAFAC class dynamin-like GTPase superfamily. GB1/RHD3 GTPase family. RHD3 subfamily. As to quaternary structure, interacts with RTN1 and YOP1; GTP binding is not required for these interactions.

The protein localises to the endoplasmic reticulum membrane. Cooperates with the reticulon proteins RTN1 and RTN2 and the tubule-shaping DP1 family protein YOP1 to generate and maintain the structure of the tubular endoplasmic reticulum network. Has GTPase activity, which is required for its function in ER organization. The protein is Protein SEY1 of Saccharomyces cerevisiae (strain YJM789) (Baker's yeast).